A 3148-amino-acid chain; its full sequence is Huntingtin (3148 aa).

HEAT repeat units follow at residues 149–186 (PYLV…ALGH) and 191–228 (GEIK…HSRR). Composition is skewed to polar residues over residues 428-451 (QQPR…SSEQ), 475-486 (SRSSSCGANITP), and 516-526 (PSDSSQTTTEG). Disordered stretches follow at residues 428–532 (QQPR…SAVT) and 557–622 (QDEE…NKMS). Residues 602–621 (SVDRFIPKDEPPEPEPDNKM) show a composition bias toward basic and acidic residues. HEAT repeat units follow at residues 760-797 (LSLV…SLCG) and 861-898 (LQER…RLFF). Low complexity-rich tracts occupy residues 1025 to 1042 (TLSV…TTSS) and 1105 to 1115 (SSSSTNTSGGT). 3 disordered regions span residues 1025-1047 (TLSV…VDPE), 1098-1117 (WAGE…GTHK), and 1158-1215 (GPPV…GSTA). Polar residues predominate over residues 1201–1215 (EANTGRPTESTGSTA). One copy of the HEAT 5 repeat lies at 1419–1456 (LFEPLVIKALKQYTTSTSVALQRQVLDLLAQLVQLRVN). Residues 1712 to 1730 (PNLSPSDQPAGDGQQNQEP) are compositionally biased toward polar residues. 2 disordered regions span residues 1712–1735 (PNLS…GEAQ) and 2072–2091 (VSDT…DGDP). Positions 2072-2084 (VSDTSSPSTPVTS) are enriched in low complexity. The Nuclear export signal motif lies at 2398 to 2407 (IIISLSRLPL). Residues 2639–2649 (EWGEDEDDEAD) are compositionally biased toward acidic residues. Positions 2639-2664 (EWGEDEDDEADPPAPTSPPLSPINSR) are disordered. Positions 2650–2659 (PPAPTSPPLS) are enriched in pro residues.

This sequence belongs to the huntingtin family.

It is found in the cytoplasm. The protein localises to the nucleus. Functionally, may play a role in microtubule-mediated transport or vesicle function. The chain is Huntingtin (htt) from Takifugu rubripes (Japanese pufferfish).